A 425-amino-acid polypeptide reads, in one-letter code: Ribosome biogenesis protein WDR12 homolog (425 aa).

The interval 7-93 (IQAKFFTKDE…ETIVHLEYLE (87 aa)) is ubiquitin-like (UBL) domain. 7 WD repeats span residues 105–142 (IHDD…RRLT), 145–187 (GHLG…NAVE), 194–233 (GHAR…TDTD), 265–303 (GHHE…MKSQ), 305–344 (AGSK…GTIV), 350–390 (SHAG…APLY), and 394–425 (GHED…FEHK). Residues 227–253 (PDSTDTDHGQDGSEEGSRKKQKTVDGK) form a disordered region. Residues 231–253 (DTDHGQDGSEEGSRKKQKTVDGK) show a composition bias toward basic and acidic residues.

Belongs to the WD repeat WDR12/YTM1 family.

It localises to the nucleus. The protein resides in the nucleolus. The protein localises to the nucleoplasm. Its function is as follows. Required for maturation of ribosomal RNAs and formation of the large ribosomal subunit. In Ixodes scapularis (Black-legged tick), this protein is Ribosome biogenesis protein WDR12 homolog.